The chain runs to 205 residues: Ferritin heavy chain (205 aa).

The N-terminal stretch at 1–19 (MVKLIASLLLLAVVAQAYG) is a signal peptide. The 156-residue stretch at 35-190 (VDMKDACIKG…GKLTTLKKMM (156 aa)) folds into the Ferritin-like diiron domain. Cysteines 41 and 150 form a disulfide. Glu-52, Glu-87, His-90, Glu-136, and Gln-172 together coordinate Fe cation.

The protein belongs to the ferritin family. As to quaternary structure, oligomer of 12 light (L) chains and 12 heavy (H) chains; L and H chains are disulfide-linked. The functional molecule forms a roughly spherical shell with a diameter of 12 nm and contains a central cavity into which the insoluble ferric iron core is deposited. In terms of tissue distribution, expressed in hemolymph and gut (at protein level). Expressed in the head (at protein level). Expressed in thorax and abdomen.

The protein resides in the golgi apparatus. It localises to the secreted. The enzyme catalyses 4 Fe(2+) + O2 + 4 H(+) = 4 Fe(3+) + 2 H2O. Its function is as follows. Stores iron in a soluble, non-toxic, readily available form. Important for iron homeostasis. Iron is taken up in the ferrous form and deposited as ferric hydroxides after oxidation. Ferritin is composed of a heavy (H) chain which is responsible for the oxidation and uptake of ferrous iron, and a light (L) chain which facilitates the nucleation of the ferrihydrite iron core. Required for dietary iron absorption in the midgut. Involved in tissue iron detoxification by exporting excess iron. Functions as an antioxidant and protects the developing organs from cell-mediated ferroptosis. Required for embryo and larval development. Plays a role in blood cell (haemocyte) differentiation in the lymph gland at the larval stage. May also store Zn(2+) and Mn(2+) and thus may play a role in zinc and manganese homeostasis. In Drosophila melanogaster (Fruit fly), this protein is Ferritin heavy chain.